The chain runs to 284 residues: Phosphatidylglycerol--prolipoprotein diacylglyceryl transferase (284 aa).

Transmembrane regions (helical) follow at residues 14–34 (IAFSLGSIEVHWYGLAYACAI), 62–82 (YFLWAELGIVLGARIGYILIY), 106–126 (FVGIRGMSYHGGLVGFLIASY), 136–156 (LLIYLDLIAISLPLGYVFGRI), 190–210 (PSQLIEAFLEGVIVFLMVMWA), 218–238 (GLLIVVYGLGYSLMRFIAEFY), and 252–272 (LSMGQILSLFMVIVSLGILLY). Arg155 lines the a 1,2-diacyl-sn-glycero-3-phospho-(1'-sn-glycerol) pocket.

It belongs to the Lgt family.

The protein localises to the cell inner membrane. It carries out the reaction L-cysteinyl-[prolipoprotein] + a 1,2-diacyl-sn-glycero-3-phospho-(1'-sn-glycerol) = an S-1,2-diacyl-sn-glyceryl-L-cysteinyl-[prolipoprotein] + sn-glycerol 1-phosphate + H(+). The protein operates within protein modification; lipoprotein biosynthesis (diacylglyceryl transfer). Functionally, catalyzes the transfer of the diacylglyceryl group from phosphatidylglycerol to the sulfhydryl group of the N-terminal cysteine of a prolipoprotein, the first step in the formation of mature lipoproteins. The chain is Phosphatidylglycerol--prolipoprotein diacylglyceryl transferase from Helicobacter pylori (strain ATCC 700392 / 26695) (Campylobacter pylori).